The chain runs to 1498 residues: MSQNNKRQVQHNHEMSNDVCPLPLPPRGAPPPTAYHASRMAATSSSTNGSFEKSAIPGNARKLHVVIVIDQKVQKNLRVREMALKDVQKVADTLNVNLTRIDFDKLDFGETETLDLFYNADVALVDVTVTHQQPSLCYHIGVRESMGQSYNMILTYWSPDPEYHIMDALKKTHAHLPMIVYIHHQDSNQLQSYDKNNNDDDSKPPFARTNVPAKTITFQHRMKQVLKSVQVEASAHSREKFMSDLRKAREITDGDQKNDYLDKMRTRLDNPDVLHPDTVSLMMLSYRDNQNYGGMIRLVDDLKRIPDCLKVVDTPVIRYQYAFALNRRNKDGDRDLALNTVLSLVEGTTENEEKNGPLSPDVVCLAGRIYKDKFIASNYEDRESLNSAIEWYRRAFEMSPLEYSGINLTTLLRASGEHFENNLEMQQIAVVLNSLLGRKGALQNLMEYWDVATYFEVSVLAENYQKACEAALMMVKLKPPVWYLKSTMENIKLINRCAATISPIEKEKQQFLFWSEFFMEATEADTDISCPRYPVLILELNKEFTPSYLTLNNEEGTVILSHVLENSQQKKIHQSELRGIHRWHFARNNIKAVTESKRDDRQLFLYVHENSDDFNLLFPTKAHCKKAYDDMKSMADVADGNYQGRVLSNPDNEKIRFEYELSNSNERVVLGKGTYGTVYAARDMDTQRQIVVKEIEVKYDEEVQPLMEEISLHSTLCHANIVQYLGCDLVGKDGSNDHFLIFMEHVPGGSLSSLLRSKWGPMNENAMNYYGKQILEGLKYLHELKIVHRDIKGDNVLVNTYSGVCKISDFGTCKRLAGLNPVTETFTGTLQYMAPEVIDHGQRGYGAPADIWSFGCTMVEMATGRPPFVEMQNPQAAMFRVGMFKTHPPIPTEITEKCRNFIKSCFLPEACDRPSAKDLLQDPFIYHNHHSISRTRSGSINKKPATKIELNHDKEKKEKSKNQREMLRSTSHIGGMGVVERSPPTPEPMSATLTAGFSHVHSQTVSNALSTAREEKKLHLKIDHARNRTFSSSSPVPDGQSSAGTNMSHPGFQLSQPSSPIVDDTNHPHLIVSPISLNTMGSPLSSAALLNRTISDESSNSSSRFFMLQKDSERRRSLGQFMQDYKDLIIDSWSTLLIKQSDTELVVTVYMLEMLLDGMRDFLLKKDNTKMQKMIDDIRGLLDYDTAKIGQINLALYHFSDSIQPVLRRLDIKPHWMFALSNLITSAVQCAISILSPDLSLLLHAQDNLPSTSSIVAIRNSSLSEGEALIESRPPSREERVREDRKELRTLQEENEILIERLLQVERELNAQLKSGITRANRFRDFAMYRNTYPPFRTPPVAHAPPTPPFSASCGAQPSGTFTNQPPSFASIKPIAQKIIMPPGTENNYQVTRVQEELVSWLRGLEIDERSIALIASEAYTKSDMMDFVTRDELLSIGVGGGSSCRIMRAIGEVRERQRRQPVFLSPMRSRDDSLDDYHSSSADDMYTGAAAETSSGN.

Disordered regions lie at residues 1-35 (MSQN…PTAY) and 190-209 (LQSY…FART). A compositionally biased stretch (pro residues) spans 22–33 (LPLPPRGAPPPT). Residues 664–925 (SNERVVLGKG…AKDLLQDPFI (262 aa)) form the Protein kinase domain. ATP is bound by residues 670–678 (LGKGTYGTV) and Lys-693. Residue Asp-790 is the Proton acceptor of the active site. The segment at 1022-1050 (IDHARNRTFSSSSPVPDGQSSAGTNMSHP) is disordered. Over residues 1031-1042 (SSSSPVPDGQSS) the composition is skewed to low complexity. Positions 1276 to 1314 (SREERVREDRKELRTLQEENEILIERLLQVERELNAQLK) form a coiled coil. Residues 1461–1498 (QPVFLSPMRSRDDSLDDYHSSSADDMYTGAAAETSSGN) are disordered. Residues 1469–1479 (RSRDDSLDDYH) show a composition bias toward basic and acidic residues.

Belongs to the protein kinase superfamily. STE Ser/Thr protein kinase family. MAP kinase kinase kinase subfamily. In terms of assembly, interacts with unc-43. Interacts with sek-1. Mg(2+) is required as a cofactor. Post-translationally, may be phosphorylated upon pathogenic bacterial infection. May be regulated by proteasomal degradation mediated by the E3-ubiquitin ligase rle-1. As to expression, expressed in intestine, hypodermis, rectal gland cell and neurons including sensory AWC neurons.

The protein localises to the cell projection. It localises to the axon. It is found in the perikaryon. The enzyme catalyses L-seryl-[protein] + ATP = O-phospho-L-seryl-[protein] + ADP + H(+). It catalyses the reaction L-threonyl-[protein] + ATP = O-phospho-L-threonyl-[protein] + ADP + H(+). Serine/threonine-protein kinase which, by phosphorylating and activating sek-1, plays an important role in the activation of the p38 pathway also composed of the downstream effectors sek-1 and pmk-1. Downstream of CaMKII unc-43 and adapter protein tir-1, plays a role in determining asymmetric cell fates in olfactory AWC neurons during neuronal development. Activation results in the repression of odorant receptor str-2 expression in one of the 2 AWC neurons. Involved in resistance to pathogenic Gram-positive and Gram-negative bacterial and fungal infection. Involved in resistance to the nematotoxic C.cinerea galectin Cgl2. Probably by activating the sek1/pmk-1/skn-1 pathway, involved in the up-regulation of gcs-1 and glutathione-S-transferase gst-4 expression upon bacterial infection. Probably downstream of tir-1 and nipi-3, required for the expression of antimicrobial peptide nlp-29 in the epidermis in response to fungal infection or physical injury. Plays a role in resistance to several environmental stresses including oxidative, protein misfolding (ER) and osmotic stresses, and DNA-damaging reagents. Plays a role in the stabilization of transcription factor rnt-1 in the intestine during oxidative stress. Involved in germline apoptosis induced by heavy metals, such as Cu(2+). In addition, plays a role in the up-regulation of gcs-1 upon arsenite treatment, most likely through activation of pmk-1, to confer protection against toxicity induced by heavy metals. Plays a role downstream of tir-1 in regulating susceptibility to anoxia. Involved in egg laying. This Caenorhabditis elegans protein is Mitogen-activated protein kinase kinase kinase nsy-1.